The sequence spans 218 residues: Small ribosomal subunit protein uS3 (218 aa).

The KH type-2 domain maps to 38–106 (IRTFLKKKLY…KLVVDIKEVK (69 aa)).

The protein belongs to the universal ribosomal protein uS3 family. Part of the 30S ribosomal subunit. Forms a tight complex with proteins S10 and S14.

Binds the lower part of the 30S subunit head. Binds mRNA in the 70S ribosome, positioning it for translation. The polypeptide is Small ribosomal subunit protein uS3 (Agathobacter rectalis (strain ATCC 33656 / DSM 3377 / JCM 17463 / KCTC 5835 / VPI 0990) (Eubacterium rectale)).